A 261-amino-acid chain; its full sequence is NAD-capped RNA hydrolase NudC (261 aa).

Positions 25 and 69 each coordinate substrate. Residues Cys-98 and Cys-101 each contribute to the Zn(2+) site. Glu-111 contributes to the substrate binding site. Residues Cys-116 and Cys-119 each contribute to the Zn(2+) site. Tyr-124 provides a ligand contact to substrate. The region spanning Pro-125 to Thr-248 is the Nudix hydrolase domain. A divalent metal cation contacts are provided by Ala-158, Glu-174, and Glu-178. The short motif at Gly-159–Asn-180 is the Nudix box element. Gln-192 to Ser-199 serves as a coordination point for substrate. A divalent metal cation is bound at residue Glu-219. Ala-241 contacts substrate.

Belongs to the Nudix hydrolase family. NudC subfamily. Homodimer. Mg(2+) serves as cofactor. It depends on Mn(2+) as a cofactor. Zn(2+) is required as a cofactor.

The catalysed reaction is a 5'-end NAD(+)-phospho-ribonucleoside in mRNA + H2O = a 5'-end phospho-adenosine-phospho-ribonucleoside in mRNA + beta-nicotinamide D-ribonucleotide + 2 H(+). It carries out the reaction NAD(+) + H2O = beta-nicotinamide D-ribonucleotide + AMP + 2 H(+). It catalyses the reaction NADH + H2O = reduced beta-nicotinamide D-ribonucleotide + AMP + 2 H(+). Functionally, mRNA decapping enzyme that specifically removes the nicotinamide adenine dinucleotide (NAD) cap from a subset of mRNAs by hydrolyzing the diphosphate linkage to produce nicotinamide mononucleotide (NMN) and 5' monophosphate mRNA. The NAD-cap is present at the 5'-end of some mRNAs and stabilizes RNA against 5'-processing. Has preference for mRNAs with a 5'-end purine. Catalyzes the hydrolysis of a broad range of dinucleotide pyrophosphates. This is NAD-capped RNA hydrolase NudC from Yersinia enterocolitica serotype O:8 / biotype 1B (strain NCTC 13174 / 8081).